The sequence spans 291 residues: tRNA U34 carboxymethyltransferase (291 aa).

Carboxy-S-adenosyl-L-methionine contacts are provided by residues K61, W75, K80, G100, 122–124 (DPS), 149–150 (VE), Y169, and R284.

Belongs to the class I-like SAM-binding methyltransferase superfamily. CmoB family. Homotetramer.

It catalyses the reaction carboxy-S-adenosyl-L-methionine + 5-hydroxyuridine(34) in tRNA = 5-carboxymethoxyuridine(34) in tRNA + S-adenosyl-L-homocysteine + H(+). Its function is as follows. Catalyzes carboxymethyl transfer from carboxy-S-adenosyl-L-methionine (Cx-SAM) to 5-hydroxyuridine (ho5U) to form 5-carboxymethoxyuridine (cmo5U) at position 34 in tRNAs. In Campylobacter jejuni subsp. jejuni serotype O:23/36 (strain 81-176), this protein is tRNA U34 carboxymethyltransferase.